Reading from the N-terminus, the 151-residue chain is Nucleoside diphosphate kinase (151 aa).

Positions 9, 57, 86, 92, 103, and 113 each coordinate ATP. Histidine 116 (pros-phosphohistidine intermediate) is an active-site residue.

The protein belongs to the NDK family. Homotetramer. Mg(2+) is required as a cofactor.

Its subcellular location is the cytoplasm. It catalyses the reaction a 2'-deoxyribonucleoside 5'-diphosphate + ATP = a 2'-deoxyribonucleoside 5'-triphosphate + ADP. The enzyme catalyses a ribonucleoside 5'-diphosphate + ATP = a ribonucleoside 5'-triphosphate + ADP. Its function is as follows. Major role in the synthesis of nucleoside triphosphates other than ATP. The ATP gamma phosphate is transferred to the NDP beta phosphate via a ping-pong mechanism, using a phosphorylated active-site intermediate. The sequence is that of Nucleoside diphosphate kinase from Chloroflexus aurantiacus (strain ATCC 29364 / DSM 637 / Y-400-fl).